The sequence spans 356 residues: Malate dehydrogenase, glyoxysomal (356 aa).

A glyoxysome-targeting transit peptide spans 1 to 36 (MQPIPDVNQRIARISAHLHPPKSQMEESSALRRANC). NAD(+) contacts are provided by residues 51-57 (GAAGGIG) and aspartate 77. 2 residues coordinate substrate: arginine 124 and arginine 130. NAD(+) is bound by residues asparagine 137 and 160–162 (ISN). Substrate is bound by residues asparagine 162 and arginine 196. The active-site Proton acceptor is histidine 220. Residue methionine 271 coordinates NAD(+).

Belongs to the LDH/MDH superfamily. MDH type 1 family. In terms of assembly, homodimer.

The protein resides in the glyoxysome. It catalyses the reaction (S)-malate + NAD(+) = oxaloacetate + NADH + H(+). This chain is Malate dehydrogenase, glyoxysomal, found in Citrullus lanatus (Watermelon).